Consider the following 188-residue polypeptide: MEGNEKAEQKNATSEESTDIFENPGEGLEKATFAAGCFWGIEEAFRQVKGVVATAVGYSGGHFEKPTYEQVCTLDTGHAEAVRVIFDPKVVSYKNLLDVFWKIHDPTTKNRQGPDVGKQYRSVIFYHNEEQKAAALASKEELEKAGVFKNPIVTEIVPVSEFYMAEDYHQQYFEKKGFLQNILRSFKK.

Positions 1 to 25 are disordered; sequence MEGNEKAEQKNATSEESTDIFENPG. Cys37 is an active-site residue.

Belongs to the MsrA Met sulfoxide reductase family.

The catalysed reaction is L-methionyl-[protein] + [thioredoxin]-disulfide + H2O = L-methionyl-(S)-S-oxide-[protein] + [thioredoxin]-dithiol. The enzyme catalyses [thioredoxin]-disulfide + L-methionine + H2O = L-methionine (S)-S-oxide + [thioredoxin]-dithiol. In terms of biological role, has an important function as a repair enzyme for proteins that have been inactivated by oxidation. Catalyzes the reversible oxidation-reduction of methionine sulfoxide in proteins to methionine. The polypeptide is Peptide methionine sulfoxide reductase MsrA (Methanosarcina acetivorans (strain ATCC 35395 / DSM 2834 / JCM 12185 / C2A)).